We begin with the raw amino-acid sequence, 778 residues long: DEK domain-containing chromatin-associated protein 4 (778 aa).

Disordered stretches follow at residues 1–334 (MGEE…RPVR) and 475–689 (LVNE…PSDE). The span at 14–26 (ANGTSSLQKTSDA) shows a compositional bias: polar residues. Basic and acidic residues-rich tracts occupy residues 40-95 (EVQE…PEAD), 121-153 (AVMK…KLEG), 165-185 (EEKL…KVEN), and 209-243 (TNKG…TESK). Residues 191–300 (KEEALKEKNE…KEDIKKSNKR (110 aa)) are a coiled coil. A compositionally biased stretch (acidic residues) spans 244–286 (DENEDKEEEKEDEKEESMDDKEDEKEESNDDDKEDEKEESNDD). 2 stretches are compositionally biased toward basic and acidic residues: residues 287–296 (KEDKKEDIKK) and 303–323 (GKTE…DIEP). The short motif at 289-296 (DKKEDIKK) is the Nuclear localization signal 1 element. Residues 489 to 496 (PKKSSPAA) carry the Nuclear localization signal 2 motif. Positions 491 to 502 (KSSPAAGSSSSK) are enriched in low complexity. Residues 526 to 587 (DDESEEEKED…EESEEETKKK (62 aa)) adopt a coiled-coil conformation. 2 stretches are compositionally biased toward acidic residues: residues 527 to 553 (DESE…EENE) and 560 to 582 (SEDE…ESEE). The short motif at 618 to 625 (PKKATQKR) is the Nuclear localization signal 3 element. The span at 621 to 631 (ATQKRSAGKRK) shows a compositional bias: basic residues. Residues 678-689 (KGKDKNKEPSDE) are compositionally biased toward basic and acidic residues. The 56-residue stretch at 685-740 (EPSDEELKTAIIDILKGVDFNTATFTDILKRLDAKFNISLASKKSSIKRMIQDELT) folds into the DEK-C domain. 2 DNA-binding regions span residues 703 to 717 (DFNT…KRLD) and 732 to 736 (KRMIQ). Residues 732–766 (KRMIQDELTKLADEAEDEEGEEEDAEHEEEEEKEK) adopt a coiled-coil conformation. A disordered region spans residues 741-778 (KLADEAEDEEGEEEDAEHEEEEEKEKAKGSGGGEEVKA). Acidic residues predominate over residues 745–763 (EAEDEEGEEEDAEHEEEEE). Residues 764-778 (KEKAKGSGGGEEVKA) show a composition bias toward basic and acidic residues.

Interacts with DEK3.

The protein resides in the nucleus. Its subcellular location is the nucleolus. Its function is as follows. Chromatin-associated protein which contributes to the modulation of chromatin structure (such as super-helical structure of DNA) and function. Binds to chromatin of protein-coding genes throughout the genome to regulate nucleosome occupancy and chromatin accessibility, and to modulate the expression of target genes. The sequence is that of DEK domain-containing chromatin-associated protein 4 from Arabidopsis thaliana (Mouse-ear cress).